The chain runs to 143 residues: FAM161 homolog famh-136 (143 aa).

It belongs to the FAM136 family.

The protein resides in the cytoplasm. Functionally, may play a role in locomotion and behavior. This Caenorhabditis elegans protein is FAM161 homolog famh-136.